A 97-amino-acid polypeptide reads, in one-letter code: RxLR effector protein PexRD21 (97 aa).

The signal sequence occupies residues 1-21; the sequence is MRLSYILVVVIAVTLQACVCA. The RxLR-dEER signature appears at 48 to 66; sequence RLLRGVKKRTAEREVQEER.

It belongs to the RxLR effector family.

It localises to the secreted. It is found in the host cell membrane. In terms of biological role, effector that is involved in host plant infection. Contributes to virulence during the early infection stage, by inhibiting plant defense responses induced by both PAMP-triggered immunity (PTI) and effector-triggered immunity (ETI). The chain is RxLR effector protein PexRD21 from Phytophthora infestans (strain T30-4) (Potato late blight agent).